Here is a 320-residue protein sequence, read N- to C-terminus: Reticulocalbin-2 (320 aa).

The signal sequence occupies residues 1–25 (MRLGPRPAVLGLLLLLLLYAAVAGA). EF-hand domains follow at residues 64–99 (EQQR…SFKH) and 100–135 (YAMQ…RVID). Aspartate 77, aspartate 79, aspartate 81, glutamate 88, aspartate 113, asparagine 115, aspartate 117, threonine 119, and glutamate 124 together coordinate Ca(2+). Threonine 140 bears the Phosphothreonine mark. EF-hand domains follow at residues 150–185 (FRQL…HPEE), 189–224 (MTEF…DPTA), 230–265 (WILV…NNQG), and 266–301 (IAQE…FLTS). Aspartate 167, glutamate 176, aspartate 202, asparagine 204, aspartate 206, glutamate 213, aspartate 243, aspartate 245, aspartate 247, arginine 249, glutamate 254, aspartate 279, asparagine 281, aspartate 283, lysine 285, and glutamate 290 together coordinate Ca(2+). A Prevents secretion from ER motif is present at residues 317-320 (HDEL).

The protein belongs to the CREC family. Binds the snake venom phospholipase complex taipoxin. In terms of tissue distribution, ubiquitous.

The protein resides in the endoplasmic reticulum lumen. In terms of biological role, not known. Binds calcium. In Rattus norvegicus (Rat), this protein is Reticulocalbin-2 (Rcn2).